The sequence spans 121 residues: MDKTQSRLRRARQTRIKIAELQVARLAVHRTNTHIYAQVFSPCGTKVLASASTLEAEVRAQLADQTGKGGNVAAATLIGKRIAEKAKAAGIESVAFDRSGFRYHGRVKALADAAREAGLKF.

The protein belongs to the universal ribosomal protein uL18 family. Part of the 50S ribosomal subunit; part of the 5S rRNA/L5/L18/L25 subcomplex. Contacts the 5S and 23S rRNAs.

This is one of the proteins that bind and probably mediate the attachment of the 5S RNA into the large ribosomal subunit, where it forms part of the central protuberance. The polypeptide is Large ribosomal subunit protein uL18 (Paraburkholderia xenovorans (strain LB400)).